A 192-amino-acid chain; its full sequence is UPF0312 protein Avin_03250 (192 aa).

The N-terminal stretch at 1-23 is a signal peptide; that stretch reads MLKKTLAALALGSALLGAGQAMA.

The protein belongs to the UPF0312 family. Type 1 subfamily.

The protein resides in the periplasm. This chain is UPF0312 protein Avin_03250, found in Azotobacter vinelandii (strain DJ / ATCC BAA-1303).